Here is a 102-residue protein sequence, read N- to C-terminus: Cytochrome b (102 aa).

The next 3 helical transmembrane spans lie at 1 to 21 (FGSL…FLAM), 45 to 66 (WLIR…YMHI), and 81 to 101 (WNIG…GYVF). Heme b is bound by residues H51 and H65.

This sequence belongs to the cytochrome b family. The cytochrome bc1 complex contains 3 respiratory subunits (MT-CYB, CYC1 and UQCRFS1), 2 core proteins (UQCRC1 and UQCRC2) and probably 6 low-molecular weight proteins. It depends on heme b as a cofactor.

The protein resides in the mitochondrion inner membrane. Its function is as follows. Component of the ubiquinol-cytochrome c reductase complex (complex III or cytochrome b-c1 complex) that is part of the mitochondrial respiratory chain. The b-c1 complex mediates electron transfer from ubiquinol to cytochrome c. Contributes to the generation of a proton gradient across the mitochondrial membrane that is then used for ATP synthesis. In Plethodon yonahlossee (Yonahlossee salamander), this protein is Cytochrome b (mt-cyb).